We begin with the raw amino-acid sequence, 286 residues long: 4-diphosphocytidyl-2-C-methyl-D-erythritol kinase (286 aa).

Residue Lys-12 is part of the active site. Position 96 to 106 (96 to 106 (PHGAGLGGGSA)) interacts with ATP. Asp-138 is an active-site residue.

Belongs to the GHMP kinase family. IspE subfamily.

The catalysed reaction is 4-CDP-2-C-methyl-D-erythritol + ATP = 4-CDP-2-C-methyl-D-erythritol 2-phosphate + ADP + H(+). It functions in the pathway isoprenoid biosynthesis; isopentenyl diphosphate biosynthesis via DXP pathway; isopentenyl diphosphate from 1-deoxy-D-xylulose 5-phosphate: step 3/6. Catalyzes the phosphorylation of the position 2 hydroxy group of 4-diphosphocytidyl-2C-methyl-D-erythritol. In Nitratidesulfovibrio vulgaris (strain DP4) (Desulfovibrio vulgaris), this protein is 4-diphosphocytidyl-2-C-methyl-D-erythritol kinase.